The following is a 117-amino-acid chain: Cysteine rich necrotrophic effector Tox1 (117 aa).

Positions 1–17 are cleaved as a signal peptide; the sequence is MKLTMVLSVAFATLTFA. Intrachain disulfides connect cysteine 36–cysteine 87, cysteine 44–cysteine 55, cysteine 53–cysteine 58, cysteine 54–cysteine 98, cysteine 63–cysteine 83, cysteine 67–cysteine 117, cysteine 86–cysteine 97, and cysteine 107–cysteine 110. A chitin-binding domain region spans residues 87–117; the sequence is CNAGGESHELCCSIASAGIDCNPCTAGLRMC.

In terms of assembly, interacts with host cell wall-associated kinase receptor Snn1.

It localises to the secreted. In terms of biological role, necrotrophic effector that plays a critical role during fungal penetration, via its interaction with the host Snn1 protein. Snn1 is a member of the wall-associated kinase class of receptors, which are known to drive pathways for biotrophic pathogen resistance. Recognition of Tox1 by Snn1 induces mitogen-activated protein kinase genes such as MAPK3 and activates programmed cell death, which allows this necrotroph to gain nutrients and sporulate. Recognition of Tox1 by Snn1 also induces other plant defense responses, including oxidative burst and pathogenesis related (PR) gene expression. The development of necrosis and disease induced by Tox1, and particularly penetration during infection, requires light, which is probably related to the light-dependent expression of host Snn1. Tox1 plays an additional role in providing significant protection from wheat chitinases by binding chitin in the fungal cell wall. In Phaeosphaeria nodorum (strain SN15 / ATCC MYA-4574 / FGSC 10173) (Glume blotch fungus), this protein is Cysteine rich necrotrophic effector Tox1.